The following is a 388-amino-acid chain: 3-dehydroquinate synthase (388 aa).

The protein belongs to the archaeal-type DHQ synthase family.

The enzyme catalyses 2-amino-2,3,7-trideoxy-D-lyxo-hept-6-ulosonate + NAD(+) + H2O = 3-dehydroquinate + NH4(+) + NADH + H(+). Functionally, catalyzes the oxidative deamination and cyclization of 2-amino-3,7-dideoxy-D-threo-hept-6-ulosonic acid (ADH) to yield 3-dehydroquinate (DHQ), which is fed into the canonical shikimic pathway of aromatic amino acid biosynthesis. This is 3-dehydroquinate synthase from Haloarcula marismortui (strain ATCC 43049 / DSM 3752 / JCM 8966 / VKM B-1809) (Halobacterium marismortui).